Consider the following 1308-residue polypeptide: Chromosome partition protein Smc (1308 aa).

Residue P34–N41 participates in ATP binding. The interval A115–Q181 is disordered. Over residues T137–P169 the composition is skewed to low complexity. Residues I278–L600 adopt a coiled-coil conformation. Residues A637–L757 form the SMC hinge domain. Coiled coils occupy residues S791–A1046 and M1110–Q1148.

The protein belongs to the SMC family. Homodimer.

The protein localises to the cytoplasm. In terms of biological role, required for chromosome condensation and partitioning. The polypeptide is Chromosome partition protein Smc (Koribacter versatilis (strain Ellin345)).